A 406-amino-acid chain; its full sequence is Succinylornithine transaminase (406 aa).

Position 252 is an N6-(pyridoxal phosphate)lysine (Lys252).

This sequence belongs to the class-III pyridoxal-phosphate-dependent aminotransferase family. AstC subfamily. Pyridoxal 5'-phosphate serves as cofactor.

It carries out the reaction N(2)-succinyl-L-ornithine + 2-oxoglutarate = N-succinyl-L-glutamate 5-semialdehyde + L-glutamate. It participates in amino-acid degradation; L-arginine degradation via AST pathway; L-glutamate and succinate from L-arginine: step 3/5. Functionally, catalyzes the transamination of N(2)-succinylornithine and alpha-ketoglutarate into N(2)-succinylglutamate semialdehyde and glutamate. Can also act as an acetylornithine aminotransferase. The sequence is that of Succinylornithine transaminase from Escherichia coli O7:K1 (strain IAI39 / ExPEC).